The following is a 998-amino-acid chain: Sensor histidine kinase AruS (998 aa).

Disordered regions lie at residues 27–82, 154–198, and 224–245; these read ERRP…HARA, RQAG…LPAG, and RQHP…RQPR. The segment covering 40–49 has biased composition (low complexity); the sequence is GEAAVRRAGL. The segment covering 161-183 has biased composition (basic residues); it reads HRLHRPRTTHRHAVRRAPGRRRE. The next 2 helical transmembrane spans lie at 264 to 284 and 395 to 415; these read VLLF…FFEY and ASLL…SWLF. One can recognise an HAMP domain in the interval 417–473; sequence SLVTRHLWRMSEFAGHIAEGDLQQPLRLDKVDRERDEIDAVAAALEDMRQALRTDRR. Positions 513-734 constitute a Histidine kinase domain; that stretch reads TMSHEIRTPL…TFWFEIELAL (222 aa). His516 carries the phosphohistidine; by autocatalysis modification. Residues 751-869 form the Response regulatory domain; that stretch reads EVLLVEDVAL…ELRRALGEVG (119 aa). Position 800 is a 4-aspartylphosphate (Asp800). The region spanning 894–987 is the HPt domain; the sequence is GRHKLAGLLG…RDGAEALRRA (94 aa). His933 carries the phosphohistidine modification.

Autophosphorylated. Activation may require a sequential transfer of a phosphate group from a His in the primary transmitter domain, to an Asp in the receiver domain and to a His in the secondary transmitter domain.

It localises to the cell membrane. The catalysed reaction is ATP + protein L-histidine = ADP + protein N-phospho-L-histidine.. The protein operates within amino-acid degradation; L-arginine degradation [regulation]. In terms of biological role, member of the two-component regulatory system AruS/AruR, which is involved in the regulation of the arginine transaminase (ATA) pathway in response to exogeneous L-arginine. Probably functions as a sensor kinase that phosphorylates AruR. The sequence is that of Sensor histidine kinase AruS (aruS) from Pseudomonas aeruginosa (strain ATCC 15692 / DSM 22644 / CIP 104116 / JCM 14847 / LMG 12228 / 1C / PRS 101 / PAO1).